Consider the following 246-residue polypeptide: Mitochondrial inner membrane protease ATP23 homolog (246 aa).

Residue His-125 participates in a divalent metal cation binding. Glu-126 is a catalytic residue. His-129 is an a divalent metal cation binding site.

This sequence belongs to the peptidase M76 family. As to quaternary structure, interacts with XRCC6.

The sequence is that of Mitochondrial inner membrane protease ATP23 homolog from Homo sapiens (Human).